The following is a 125-amino-acid chain: Small ribosomal subunit protein uS12m (125 aa).

The tract at residues 1–51 is disordered; the sequence is MPTKNQLIRHGREEKRRTDRTRALDQCPQKQGVCPRVSTRTPKKPNSAPRK. A compositionally biased stretch (basic and acidic residues) spans 10 to 23; sequence HGREEKRRTDRTRA.

The protein belongs to the universal ribosomal protein uS12 family.

The protein resides in the mitochondrion. In terms of biological role, protein S12 is involved in the translation initiation step. The protein is Small ribosomal subunit protein uS12m (RPS12) of Nicotiana sylvestris (Wood tobacco).